The following is a 693-amino-acid chain: Zinc finger protein 441 (693 aa).

Positions 4–79 constitute a KRAB domain; it reads VAFEDVAINF…ERACEIKDNS (76 aa). Residues 169–190 form a C2H2-type 1 zinc finger; the sequence is YDCKECASFSSLENLQRHMAAH. Residues 196 to 218 form a C2H2-type 2; degenerate zinc finger; the sequence is RICKLCGNAFIWPSLFHMLRRTH. The C2H2-type 3; degenerate zinc finger occupies 224-246; the sequence is YEYEQCSTAFPAYSSTLRHERTH. A C2H2-type 4; degenerate zinc finger spans residues 252-274; that stretch reads YQCKQCGKAFSCSCYTQLYERTH. 15 C2H2-type zinc fingers span residues 280–302, 308–330, 336–358, 364–386, 392–413, 419–441, 447–469, 475–497, 503–525, 531–553, 559–581, 587–609, 615–637, 643–665, and 671–693; these read YECKQCGKAFYHLGSFQRHMIVH, HKCKICGKGFLSPSSVRRHKRTH, YECKYCGKAFSDCTGFRRHMITH, HKCKVCGKAFDSPSLCRRHETTH, YKCECGKAFSDFYYFRNHETTH, YKCKQCGKAFICCTYLQIHERIH, YKCKQCGKAFRSSNYIRVHEKTH, YECKQCGKALSHLKSFQRHMIMH, HKCKICGKSFDSPSSFRRHERIH, YKCKLCGKGFRSSSYIQLHERTH, YGCQQCGKALSDLSSFRRHMITH, HKCKICGKGFDYPSSVQRHERTH, YECKECGKAFSHSSYLRIHERVH, YKCKECGKPFHCPSAFHKHERTH, and YKCKECGEAFHCISSFHKHEMTH.

Belongs to the krueppel C2H2-type zinc-finger protein family.

It localises to the nucleus. Functionally, may be involved in transcriptional regulation. This chain is Zinc finger protein 441 (ZNF441), found in Homo sapiens (Human).